The sequence spans 181 residues: Crossover junction endodeoxyribonuclease RuvC (181 aa).

Residues aspartate 8, glutamate 67, and aspartate 139 contribute to the active site. Aspartate 8, glutamate 67, and aspartate 139 together coordinate Mg(2+).

This sequence belongs to the RuvC family. Homodimer which binds Holliday junction (HJ) DNA. The HJ becomes 2-fold symmetrical on binding to RuvC with unstacked arms; it has a different conformation from HJ DNA in complex with RuvA. In the full resolvosome a probable DNA-RuvA(4)-RuvB(12)-RuvC(2) complex forms which resolves the HJ. Mg(2+) serves as cofactor.

The protein localises to the cytoplasm. The catalysed reaction is Endonucleolytic cleavage at a junction such as a reciprocal single-stranded crossover between two homologous DNA duplexes (Holliday junction).. The RuvA-RuvB-RuvC complex processes Holliday junction (HJ) DNA during genetic recombination and DNA repair. Endonuclease that resolves HJ intermediates. Cleaves cruciform DNA by making single-stranded nicks across the HJ at symmetrical positions within the homologous arms, yielding a 5'-phosphate and a 3'-hydroxyl group; requires a central core of homology in the junction. The consensus cleavage sequence is 5'-(A/T)TT(C/G)-3'. Cleavage occurs on the 3'-side of the TT dinucleotide at the point of strand exchange. HJ branch migration catalyzed by RuvA-RuvB allows RuvC to scan DNA until it finds its consensus sequence, where it cleaves and resolves the cruciform DNA. The protein is Crossover junction endodeoxyribonuclease RuvC of Acinetobacter baylyi (strain ATCC 33305 / BD413 / ADP1).